The following is a 79-amino-acid chain: uncharacterized protein (79 aa).

The stretch at 4-43 forms a coiled coil; the sequence is QENEDLRKQLVEASELLKSQAKELKDAHQQQKLALQDFLE.

This is an uncharacterized protein from Homo sapiens (Human).